We begin with the raw amino-acid sequence, 479 residues long: Membrane-bound lytic murein transglycosylase F (479 aa).

The first 15 residues, 1-15, serve as a signal peptide directing secretion; sequence MKRLLLVLCYITLLA. The interval 16–258 is non-LT domain; that stretch reads GCQKVVVEQE…HLNEKYFAHV (243 aa). The segment at 260-479 is LT domain; that stretch reads RFDYVDTRAF…QTDAIQPQQP (220 aa). E303 is an active-site residue. The disordered stretch occupies residues 457–479; sequence LQTAEAKETEEKPQTDAIQPQQP. The segment covering 461–470 has biased composition (basic and acidic residues); sequence EAKETEEKPQ.

In the N-terminal section; belongs to the bacterial solute-binding protein 3 family. The protein in the C-terminal section; belongs to the transglycosylase Slt family.

The protein localises to the cell outer membrane. It catalyses the reaction Exolytic cleavage of the (1-&gt;4)-beta-glycosidic linkage between N-acetylmuramic acid (MurNAc) and N-acetylglucosamine (GlcNAc) residues in peptidoglycan, from either the reducing or the non-reducing ends of the peptidoglycan chains, with concomitant formation of a 1,6-anhydrobond in the MurNAc residue.. Functionally, murein-degrading enzyme that degrades murein glycan strands and insoluble, high-molecular weight murein sacculi, with the concomitant formation of a 1,6-anhydromuramoyl product. Lytic transglycosylases (LTs) play an integral role in the metabolism of the peptidoglycan (PG) sacculus. Their lytic action creates space within the PG sacculus to allow for its expansion as well as for the insertion of various structures such as secretion systems and flagella. The polypeptide is Membrane-bound lytic murein transglycosylase F (Shewanella pealeana (strain ATCC 700345 / ANG-SQ1)).